A 154-amino-acid chain; its full sequence is D-aminoacyl-tRNA deacylase (154 aa).

Residues 142–143 carry the Gly-cisPro motif, important for rejection of L-amino acids motif; it reads GP.

It belongs to the DTD family. Homodimer.

The protein resides in the cytoplasm. The catalysed reaction is glycyl-tRNA(Ala) + H2O = tRNA(Ala) + glycine + H(+). It catalyses the reaction a D-aminoacyl-tRNA + H2O = a tRNA + a D-alpha-amino acid + H(+). In terms of biological role, an aminoacyl-tRNA editing enzyme that deacylates mischarged D-aminoacyl-tRNAs. Also deacylates mischarged glycyl-tRNA(Ala), protecting cells against glycine mischarging by AlaRS. Acts via tRNA-based rather than protein-based catalysis; rejects L-amino acids rather than detecting D-amino acids in the active site. By recycling D-aminoacyl-tRNA to D-amino acids and free tRNA molecules, this enzyme counteracts the toxicity associated with the formation of D-aminoacyl-tRNA entities in vivo and helps enforce protein L-homochirality. This is D-aminoacyl-tRNA deacylase from Polaromonas sp. (strain JS666 / ATCC BAA-500).